An 87-amino-acid polypeptide reads, in one-letter code: NADH dehydrogenase [ubiquinone] 1 alpha subcomplex subunit 4-like 2 (87 aa).

This sequence belongs to the complex I NDUFA4 subunit family.

In Bos taurus (Bovine), this protein is NADH dehydrogenase [ubiquinone] 1 alpha subcomplex subunit 4-like 2 (NDUFA4L2).